We begin with the raw amino-acid sequence, 236 residues long: ATP synthase subunit a (236 aa).

The next 5 membrane-spanning stretches (helical) occupy residues 18–38 (SNLLMVTVASVIVFLIAVLCT), 80–100 (VTLLMYIFVSNMLGLPFAIVI), 112–132 (DPAITLTLAVMVVVLSHYYGI), 179–199 (ILLSLLAGLATTGFLGTIGAA), and 200–220 (IPMLLWQGFSIFVGAIQAFIF).

The protein belongs to the ATPase A chain family. F-type ATPases have 2 components, CF(1) - the catalytic core - and CF(0) - the membrane proton channel. CF(1) has five subunits: alpha(3), beta(3), gamma(1), delta(1), epsilon(1). CF(0) has three main subunits: a(1), b(2) and c(9-12). The alpha and beta chains form an alternating ring which encloses part of the gamma chain. CF(1) is attached to CF(0) by a central stalk formed by the gamma and epsilon chains, while a peripheral stalk is formed by the delta and b chains.

It localises to the cell membrane. In terms of biological role, key component of the proton channel; it plays a direct role in the translocation of protons across the membrane. The protein is ATP synthase subunit a of Priestia megaterium (strain ATCC 12872 / QMB1551) (Bacillus megaterium).